The following is a 447-amino-acid chain: GA-binding protein subunit beta-2 (447 aa).

5 ANK repeats span residues 5 to 34 (DLGK…PFTT), 37 to 66 (LGTS…SRDA), 70 to 99 (VDRT…DVNA), 103 to 132 (LKMT…DVHA), and 136 to 166 (FDKS…QVNA). Phosphoserine is present on Ser253. The stretch at 345-395 (EESKEGTERELLQQRLQEANRRAQEYRHQLLKKEQEAEQYRLRLEAMARQQ) forms a coiled coil. The disordered stretch occupies residues 418–447 (REMEERETEVTGAVGTAEPHTGVSMETVST).

Heterotetramer of two alpha and two beta subunits. The C-terminal is necessary for the formation of a heterotetrameric GABP-alpha-2/beta-2 complex, and also facilitates homotypic dimerization. Interacts with ADGRB2.

It localises to the nucleus. May function as transcription factor capable of interacting with purine rich repeats (GA repeats). The polypeptide is GA-binding protein subunit beta-2 (GABPB2) (Bos taurus (Bovine)).